The chain runs to 505 residues: MVSIRPDEISSILKQQITDYDQSVSVSNVGTVLQIGDGIARIYGLDQVMAGELLEFEDGTEGIALNLEDDNVGAVLMGEALGVQEGSNVKSTGKIASVPVGEAMQGRVVNPLGQPIDGKGEIPTSDTRLIEEMAPGIIKRRSVHEPMQTGITSIDAMIPVGRGQRELIIGDRQTGKSAIAIDTIINQKGQDVVCVYVAIGQKSASVANVVEVLREKGALDYTIVVSAGASEAAALQYLAPYTGAAIAEHFMYQGKATLVIYDDLTKQAQAYRQMSLLLRRPPGREAYPGDVFYCHSRLLERAAKLSDDMGGGSMTALPIIETQAGDVSAYIPTNVISITDGQIFLSADLFNSGLRPAINVGISVSRVGGAAQTKAIKKIAGTLKLELAQFDELAAFSQFASDLDEATQQQLERGKRLRELLKQAQFSPLNLAEQVAVVYAGVKGLIDEVPVEDVTKFAAELREYLKLNKAEFIEEILKEKKLNDGLEATLKEVIKEVKSSMLATV.

Residue 170–177 (GDRQTGKS) coordinates ATP.

Belongs to the ATPase alpha/beta chains family. In terms of assembly, F-type ATPases have 2 components, CF(1) - the catalytic core - and CF(0) - the membrane proton channel. CF(1) has five subunits: alpha(3), beta(3), gamma(1), delta(1), epsilon(1). CF(0) has four main subunits: a(1), b(1), b'(1) and c(9-12).

Its subcellular location is the cellular thylakoid membrane. The enzyme catalyses ATP + H2O + 4 H(+)(in) = ADP + phosphate + 5 H(+)(out). Produces ATP from ADP in the presence of a proton gradient across the membrane. The alpha chain is a regulatory subunit. The polypeptide is ATP synthase subunit alpha (Prochlorococcus marinus (strain MIT 9312)).